The primary structure comprises 234 residues: DNA repair protein RecO (234 aa).

It belongs to the RecO family.

Involved in DNA repair and RecF pathway recombination. The sequence is that of DNA repair protein RecO from Hamiltonella defensa subsp. Acyrthosiphon pisum (strain 5AT).